The sequence spans 199 residues: MEAFDTHTGIGVPLRRSNVDTDQIIPAVYLKRVTRTGFEDGLFAGWRTDPSFILNLEPFNRGTVLVAGPEFGTGSSREHAVWALMDYGFRVVLSSRFGDIFRGNAGKAGLVAGLVGQSDIELLWKLIEQNPGLELTVNLEDRTVTAGTAVVPFEIDDYTRWRLLEGLDDIGLTLRKVDEIAAFEAARPEFKPRTLEPSE.

It belongs to the LeuD family. LeuD type 1 subfamily. In terms of assembly, heterodimer of LeuC and LeuD.

The enzyme catalyses (2R,3S)-3-isopropylmalate = (2S)-2-isopropylmalate. It participates in amino-acid biosynthesis; L-leucine biosynthesis; L-leucine from 3-methyl-2-oxobutanoate: step 2/4. Its function is as follows. Catalyzes the isomerization between 2-isopropylmalate and 3-isopropylmalate, via the formation of 2-isopropylmaleate. This Mycobacteroides abscessus (strain ATCC 19977 / DSM 44196 / CCUG 20993 / CIP 104536 / JCM 13569 / NCTC 13031 / TMC 1543 / L948) (Mycobacterium abscessus) protein is 3-isopropylmalate dehydratase small subunit.